Consider the following 156-residue polypeptide: Probable low-salt glycan biosynthesis epimerase Agl13 (156 aa).

Substrate contacts are provided by residues Arg-19, Glu-24, 39 to 41 (MSY), Arg-51, His-54, and His-109.

This sequence belongs to the dTDP-4-dehydrorhamnose 3,5-epimerase family.

It participates in protein modification; protein glycosylation. Its pathway is cell surface structure biogenesis; S-layer biogenesis. Epimerase involved in N-glycan biosynthetic pathway that takes place under low-salt conditions (1.75 M instead of 3.4 M). Participates in the formation of the tetrasaccharide present at 'Asn-532' of S-layer glycoprotein Csg, consisting of a sulfated hexose, 2 hexoses and rhamnose. Involved in the addition of final rhamnose (sugar 4) of the tetrasaccharide on the dolichol phosphate carrier. The polypeptide is Probable low-salt glycan biosynthesis epimerase Agl13 (agl13) (Haloferax volcanii (strain ATCC 29605 / DSM 3757 / JCM 8879 / NBRC 14742 / NCIMB 2012 / VKM B-1768 / DS2) (Halobacterium volcanii)).